Reading from the N-terminus, the 70-residue chain is ATP synthase subunit c (70 aa).

2 helical membrane passes run 3–23 (ALAAGIAMLAGLGVGIGIGIA) and 44–64 (LFFIGAALAEAVAIYSFVIAI).

The protein belongs to the ATPase C chain family. F-type ATPases have 2 components, F(1) - the catalytic core - and F(0) - the membrane proton channel. F(1) has five subunits: alpha(3), beta(3), gamma(1), delta(1), epsilon(1). F(0) has three main subunits: a(1), b(2) and c(10-14). The alpha and beta chains form an alternating ring which encloses part of the gamma chain. F(1) is attached to F(0) by a central stalk formed by the gamma and epsilon chains, while a peripheral stalk is formed by the delta and b chains.

It localises to the cell membrane. Functionally, f(1)F(0) ATP synthase produces ATP from ADP in the presence of a proton or sodium gradient. F-type ATPases consist of two structural domains, F(1) containing the extramembraneous catalytic core and F(0) containing the membrane proton channel, linked together by a central stalk and a peripheral stalk. During catalysis, ATP synthesis in the catalytic domain of F(1) is coupled via a rotary mechanism of the central stalk subunits to proton translocation. Its function is as follows. Key component of the F(0) channel; it plays a direct role in translocation across the membrane. A homomeric c-ring of between 10-14 subunits forms the central stalk rotor element with the F(1) delta and epsilon subunits. The protein is ATP synthase subunit c of Caldicellulosiruptor saccharolyticus (strain ATCC 43494 / DSM 8903 / Tp8T 6331).